The primary structure comprises 177 residues: Thymidine kinase (177 aa).

11 to 18 (GPMFSGKS) lines the ATP pocket. E83 acts as the Proton acceptor in catalysis. F113 provides a ligand contact to substrate. 2 residues coordinate Zn(2+): C138 and C141. Substrate is bound at residue 157-161 (IEIIG). Residues C170 and C173 each contribute to the Zn(2+) site.

The protein belongs to the thymidine kinase family. Homotetramer. Two molecules of substrate bind to each enzyme tetramer.

It carries out the reaction thymidine + ATP = dTMP + ADP + H(+). In terms of biological role, phosphorylates thymidine and thymidine analogs, such as azidothymidine (AZT). Part of the salvage pathway for pyrimidine deoxyribonucleotide synthesis. This Vaccinia virus (strain Tian Tan) (VACV) protein is Thymidine kinase (OPG101).